Consider the following 341-residue polypeptide: ATPase GET3 (341 aa).

34 to 41 (KGGVGKTT) provides a ligand contact to ATP. The active site involves aspartate 63. ATP is bound by residues glutamate 245 and asparagine 272. Zn(2+)-binding residues include cysteine 283 and cysteine 286.

Belongs to the arsA ATPase family. As to quaternary structure, homodimer.

The protein resides in the cytoplasm. Its subcellular location is the endoplasmic reticulum. Its function is as follows. ATPase required for the post-translational delivery of tail-anchored (TA) proteins to the endoplasmic reticulum. Recognizes and selectively binds the transmembrane domain of TA proteins in the cytosol. This complex then targets to the endoplasmic reticulum by membrane-bound receptors, where the tail-anchored protein is released for insertion. This process is regulated by ATP binding and hydrolysis. ATP binding drives the homodimer towards the closed dimer state, facilitating recognition of newly synthesized TA membrane proteins. ATP hydrolysis is required for insertion. Subsequently, the homodimer reverts towards the open dimer state, lowering its affinity for the membrane-bound receptor, and returning it to the cytosol to initiate a new round of targeting. The polypeptide is ATPase GET3 (Ajellomyces capsulatus (strain H143) (Darling's disease fungus)).